Consider the following 132-residue polypeptide: Transcription antitermination protein NusB (132 aa).

The protein belongs to the NusB family.

In terms of biological role, involved in transcription antitermination. Required for transcription of ribosomal RNA (rRNA) genes. Binds specifically to the boxA antiterminator sequence of the ribosomal RNA (rrn) operons. The polypeptide is Transcription antitermination protein NusB (Campylobacter jejuni subsp. jejuni serotype O:2 (strain ATCC 700819 / NCTC 11168)).